A 154-amino-acid polypeptide reads, in one-letter code: Ribonuclease 8 (154 aa).

The first 27 residues, 1–27 (MAPARAGCCALLLLLLGLWVAEIPVSA), serve as a signal peptide directing secretion. Histidine 42 acts as the Proton acceptor in catalysis. 3 cysteine pairs are disulfide-bonded: cysteine 64–cysteine 118, cysteine 82–cysteine 133, and cysteine 89–cysteine 96. Substrate is bound by residues 65–69 (KDLNT) and lysine 90. Residue histidine 149 is the Proton donor of the active site.

It belongs to the pancreatic ribonuclease family.

Its subcellular location is the secreted. Functionally, has a low ribonuclease activity. In Pongo pygmaeus (Bornean orangutan), this protein is Ribonuclease 8 (RNASE8).